The sequence spans 1130 residues: DNA-directed RNA polymerase I subunit rpa2 (1130 aa).

The segment at 1070-1096 (CKLCGSTLTIYSKKDYSNQTVSECKSC) adopts a C4-type zinc-finger fold.

It belongs to the RNA polymerase beta chain family. Component of the RNA polymerase I (Pol I) complex consisting of 14 subunits.

The protein resides in the nucleus. The protein localises to the nucleolus. The catalysed reaction is RNA(n) + a ribonucleoside 5'-triphosphate = RNA(n+1) + diphosphate. In terms of biological role, DNA-dependent RNA polymerase catalyzes the transcription of DNA into RNA using the four ribonucleoside triphosphates as substrates. Second largest core component of RNA polymerase I which synthesizes ribosomal RNA precursors. Proposed to contribute to the polymerase catalytic activity and forms the polymerase active center together with the largest subunit. Pol I is composed of mobile elements and RPA2 is part of the core element with the central large cleft and probably a clamp element that moves to open and close the cleft. This chain is DNA-directed RNA polymerase I subunit rpa2 (polr1b), found in Dictyostelium discoideum (Social amoeba).